Reading from the N-terminus, the 182-residue chain is Keratin, ultra high-sulfur matrix protein (182 aa).

Belongs to the KRTAP type 5 family. In terms of tissue distribution, cuticle layers of differentiating wool follicles.

In terms of biological role, the keratin products of mammalian epidermal derivatives such as wool and hair consist of microfibrils embedded in a rigid matrix of other proteins. The matrix proteins include the high-sulfur and high-tyrosine keratins, having molecular weights of 6-20 kDa, whereas the microfibrils contain the larger, low-sulfur keratins (40-56 kDa). This is Keratin, ultra high-sulfur matrix protein from Ovis aries (Sheep).